A 213-amino-acid polypeptide reads, in one-letter code: MTTNKSSLSYFTDALWINNQPLVAILGICSALAVTTTVTTALTMGLAVSFVTGFASFVVSLLRKITPESVRMIAQLIIISLFVILIDQFLKAFFFNISKTLSVFVGLIITNCIVMGRAESMARHISPIPAFLDGLGSGLGYGWVLVCISIIRELFGFGTILGFHIIPKIFYASAAHPDGYENLGLMVLAPSAFFLLGIMVWLVNIVRASKTKR.

7 helical membrane passes run 14-34 (ALWI…ALAV), 42-62 (LTMG…VSLL), 77-97 (IIIS…FFNI), 101-121 (LSVF…AESM), 131-151 (FLDG…ISII), 154-174 (LFGF…YASA), and 183-203 (LGLM…VWLV).

It belongs to the NqrDE/RnfAE family. As to quaternary structure, composed of six subunits; NqrA, NqrB, NqrC, NqrD, NqrE and NqrF.

The protein resides in the cell inner membrane. It carries out the reaction a ubiquinone + n Na(+)(in) + NADH + H(+) = a ubiquinol + n Na(+)(out) + NAD(+). Its function is as follows. NQR complex catalyzes the reduction of ubiquinone-1 to ubiquinol by two successive reactions, coupled with the transport of Na(+) ions from the cytoplasm to the periplasm. NqrA to NqrE are probably involved in the second step, the conversion of ubisemiquinone to ubiquinol. This is Na(+)-translocating NADH-quinone reductase subunit D from Chlamydia muridarum (strain MoPn / Nigg).